Consider the following 286-residue polypeptide: Probable ketoamine kinase YniA (286 aa).

Asp-91–Leu-93 is an ATP binding site. Catalysis depends on Asp-193, which acts as the Proton acceptor.

This sequence belongs to the fructosamine kinase family.

Its function is as follows. Ketoamine kinase that phosphorylates ketoamines on the third carbon of the sugar moiety to generate ketoamine 3-phosphate. This chain is Probable ketoamine kinase YniA (yniA), found in Escherichia coli O157:H7.